A 580-amino-acid polypeptide reads, in one-letter code: Protein O-linked-mannose beta-1,4-N-acetylglucosaminyltransferase 2 (580 aa).

Over 1-4 the chain is Cytoplasmic; that stretch reads MHLS. The helical; Signal-anchor for type II membrane protein transmembrane segment at 5–25 threads the bilayer; sequence AVFNALLVSVLAAVLWKHVRL. The Lumenal portion of the chain corresponds to 26-580; that stretch reads REHAATLEEE…PFADVLVCNT (555 aa). N-linked (GlcNAc...) asparagine glycosylation is found at N99 and N276. The Fibronectin type-III domain maps to 488–580; the sequence is ARCQASVHGA…PFADVLVCNT (93 aa).

It belongs to the glycosyltransferase 61 family.

It localises to the endoplasmic reticulum membrane. The catalysed reaction is 3-O-(alpha-D-mannosyl)-L-threonyl-[protein] + UDP-N-acetyl-alpha-D-glucosamine = 3-O-(N-acetyl-beta-D-glucosaminyl-(1-&gt;4)-alpha-D-mannosyl)-L-threonyl-[protein] + UDP + H(+). It participates in protein modification; protein glycosylation. Its function is as follows. O-linked mannose beta-1,4-N-acetylglucosaminyltransferase that transfers UDP-N-acetyl-D-glucosamine to the 4-position of the mannose to generate N-acetyl-D-glucosamine-beta-1,4-O-D-mannosylprotein. Involved in the biosynthesis of the phosphorylated O-mannosyl trisaccharide (N-acetylgalactosamine-beta-3-N-acetylglucosamine-beta-4-(phosphate-6-)mannose), a carbohydrate structure present in alpha-dystroglycan (DAG1), which is required for binding laminin G-like domain-containing extracellular proteins with high affinity. The polypeptide is Protein O-linked-mannose beta-1,4-N-acetylglucosaminyltransferase 2 (POMGNT2) (Pan troglodytes (Chimpanzee)).